A 155-amino-acid chain; its full sequence is 6,7-dimethyl-8-ribityllumazine synthase (155 aa).

Residues Phe-23, 57-59, and 81-83 each bind 5-amino-6-(D-ribitylamino)uracil; these read AFE and AVI. 86–87 lines the (2S)-2-hydroxy-3-oxobutyl phosphate pocket; the sequence is ST. His-89 serves as the catalytic Proton donor. Phe-114 is a binding site for 5-amino-6-(D-ribitylamino)uracil. Arg-128 provides a ligand contact to (2S)-2-hydroxy-3-oxobutyl phosphate.

This sequence belongs to the DMRL synthase family.

It carries out the reaction (2S)-2-hydroxy-3-oxobutyl phosphate + 5-amino-6-(D-ribitylamino)uracil = 6,7-dimethyl-8-(1-D-ribityl)lumazine + phosphate + 2 H2O + H(+). It functions in the pathway cofactor biosynthesis; riboflavin biosynthesis; riboflavin from 2-hydroxy-3-oxobutyl phosphate and 5-amino-6-(D-ribitylamino)uracil: step 1/2. Its function is as follows. Catalyzes the formation of 6,7-dimethyl-8-ribityllumazine by condensation of 5-amino-6-(D-ribitylamino)uracil with 3,4-dihydroxy-2-butanone 4-phosphate. This is the penultimate step in the biosynthesis of riboflavin. This chain is 6,7-dimethyl-8-ribityllumazine synthase, found in Desulfatibacillum aliphaticivorans.